The primary structure comprises 142 residues: FAD synthase (142 aa).

Residues 9–10 (TF), 14–17 (HPGH), and Asp92 each bind ATP.

It belongs to the archaeal FAD synthase family. In terms of assembly, homodimer. It depends on a divalent metal cation as a cofactor.

It carries out the reaction FMN + ATP + H(+) = FAD + diphosphate. Its pathway is cofactor biosynthesis; FAD biosynthesis; FAD from FMN: step 1/1. Functionally, catalyzes the transfer of the AMP portion of ATP to flavin mononucleotide (FMN) to produce flavin adenine dinucleotide (FAD) coenzyme. This is FAD synthase from Methanohalophilus mahii (strain ATCC 35705 / DSM 5219 / SLP).